The sequence spans 239 residues: N-glycosylase/DNA lyase (239 aa).

Residues Q24, S51, and W62 each coordinate 8-oxoguanine. The tract at residues 118–182 (ERYYEDMTLL…EDVRIIKLTR (65 aa)) is helix-hairpin-helix. The active-site Schiff-base intermediate with DNA is the K142. Residues F146 and P172 each contribute to the 8-oxoguanine site. D174 is an active-site residue. 8-oxoguanine-binding residues include D208 and W212.

It belongs to the archaeal N-glycosylase/DNA lyase (AGOG) family.

It carries out the reaction 2'-deoxyribonucleotide-(2'-deoxyribose 5'-phosphate)-2'-deoxyribonucleotide-DNA = a 3'-end 2'-deoxyribonucleotide-(2,3-dehydro-2,3-deoxyribose 5'-phosphate)-DNA + a 5'-end 5'-phospho-2'-deoxyribonucleoside-DNA + H(+). In terms of biological role, DNA repair enzyme that is part of the base excision repair (BER) pathway; protects from oxidative damage by removing the major product of DNA oxidation, 8-oxoguanine (GO), from single- and double-stranded DNA substrates. This is N-glycosylase/DNA lyase from Pyrococcus horikoshii (strain ATCC 700860 / DSM 12428 / JCM 9974 / NBRC 100139 / OT-3).